Here is a 174-residue protein sequence, read N- to C-terminus: Secretion monitor (174 aa).

The N-terminal stretch at Met1–Ala35 is a signal peptide.

Belongs to the SecM family.

Its subcellular location is the cytoplasm. The protein resides in the cytosol. The protein localises to the periplasm. In terms of biological role, regulates secA expression by translational coupling of the secM secA operon. Translational pausing at a specific Pro residue 5 residues before the end of the protein may allow disruption of a mRNA repressor helix that normally suppresses secA translation initiation. In Photorhabdus laumondii subsp. laumondii (strain DSM 15139 / CIP 105565 / TT01) (Photorhabdus luminescens subsp. laumondii), this protein is Secretion monitor.